A 792-amino-acid polypeptide reads, in one-letter code: Replication factor A (792 aa).

DNA-binding regions (OB) lie at residues 81–140, 192–273, 301–365, and 422–494; these read VTGR…IRIK, VNVI…TSLT, VTVM…ANVE, and VDVV…VELS. Residues 678 to 696 form a C4-type zinc finger; the sequence is CPSCNERLDLSDENICNFC.

As to quaternary structure, probably binds DNA polymerase PolB. Binds helicase Hel308, in presence and absence of DNA.

Its function is as follows. Inhibits DNA polymerase activity of PolB, which can be overcome by RFC and PNCA. Stimulates 3'-to 5'-exonuclease activity of PolB at 30 degrees Celsius, but has no effect at 50 or 70 degrees Celsius. Bind ssDNA and replication forks; replication forks structures bind both Hel308 and this protein. Has no effect on helicase activity of Hel308; may help target the helicase to DNA substrates that require DNA re-modeling. This Methanothermobacter thermautotrophicus (strain ATCC 29096 / DSM 1053 / JCM 10044 / NBRC 100330 / Delta H) (Methanobacterium thermoautotrophicum) protein is Replication factor A (rpa).